Here is a 797-residue protein sequence, read N- to C-terminus: Adhesion G-protein coupled receptor G7 (797 aa).

The signal sequence occupies residues 1-26; that stretch reads MASCRAWNLRVLVAVVCGLLTGIILG. At 27–438 the chain is on the extracellular side; the sequence is LGIWRIVIRI…QYPKSLDILS (412 aa). N-linked (GlcNAc...) asparagine glycans are attached at residues N82, N159, N178, N191, N247, N261, N312, N316, and N387. The GAIN-B domain occupies 275-428; sequence FSVQKGASSS…AVLMTFKKDY (154 aa). 2 disulfides stabilise this stretch: C383/C410 and C398/C412. Residues 383-428 form a GPS region; that stretch reads CVYWNLSAKDWDTYGCQKDKGTDGFLRCRCNHTTNFAVLMTFKKDY. N413 carries an N-linked (GlcNAc...) asparagine glycan. A helical membrane pass occupies residues 439-459; sequence NVGCALSVTGLALTVIFQIVT. Over 460 to 468 the chain is Cytoplasmic; sequence RKVRKTSVT. Residues 469-489 form a helical membrane-spanning segment; sequence WVLVNLCISMLIFNLLFVFGI. Over 490–528 the chain is Extracellular; sequence ENSNKNLQTSDGDINNIDFDNNDIPRTDTINIPNPMCTA. The chain crosses the membrane as a helical span at residues 529–549; that stretch reads IAALLHYFLLVTFTWNALSAA. Residues 550–565 are Cytoplasmic-facing; sequence QLYYLLIRTMKPLPRH. The chain crosses the membrane as a helical span at residues 566–586; sequence FILFISLIGWGVPAIVVAITV. Over 587–623 the chain is Extracellular; sequence GVIYSQNGNNPQWELDYRQEKICWLAIPEPNGVIKSP. Residues 624-644 traverse the membrane as a helical segment; sequence LLWSFIVPVTIILISNVVMFI. Residues 645 to 669 are Cytoplasmic-facing; sequence TISIKVLWKNNQNLTSTKKVSSMKK. Residues 670 to 690 traverse the membrane as a helical segment; that stretch reads IVSTLSVAVVFGITWILAYLM. Residues 691 to 698 lie on the Extracellular side of the membrane; the sequence is LVNDDSIR. A helical membrane pass occupies residues 699–719; that stretch reads IVFSYIFCLFNTTQGLQIFIL. The Cytoplasmic portion of the chain corresponds to 720–797; that stretch reads YTVRTKVFQS…SESDNAKESI (78 aa).

It belongs to the G-protein coupled receptor 2 family. Adhesion G-protein coupled receptor (ADGR) subfamily.

The protein resides in the membrane. Orphan receptor. The protein is Adhesion G-protein coupled receptor G7 (ADGRG7) of Homo sapiens (Human).